A 361-amino-acid chain; its full sequence is Ribosomal RNA large subunit methyltransferase M (361 aa).

S-adenosyl-L-methionine contacts are provided by residues Ser-187, 220–223 (CPGG), Asp-239, Asp-259, and Asp-276. Residue Lys-305 is the Proton acceptor of the active site.

Belongs to the class I-like SAM-binding methyltransferase superfamily. RNA methyltransferase RlmE family. RlmM subfamily. Monomer.

Its subcellular location is the cytoplasm. It carries out the reaction cytidine(2498) in 23S rRNA + S-adenosyl-L-methionine = 2'-O-methylcytidine(2498) in 23S rRNA + S-adenosyl-L-homocysteine + H(+). In terms of biological role, catalyzes the 2'-O-methylation at nucleotide C2498 in 23S rRNA. In Shewanella amazonensis (strain ATCC BAA-1098 / SB2B), this protein is Ribosomal RNA large subunit methyltransferase M.